We begin with the raw amino-acid sequence, 447 residues long: N-succinylarginine dihydrolase (447 aa).

Substrate is bound by residues 19–28 (AGLSFGNEAS), N110, and 137–138 (HR). E174 is an active-site residue. R212 contacts substrate. The active site involves H248. Positions 250 and 359 each coordinate substrate. The active-site Nucleophile is C365.

This sequence belongs to the succinylarginine dihydrolase family. As to quaternary structure, homodimer.

The enzyme catalyses N(2)-succinyl-L-arginine + 2 H2O + 2 H(+) = N(2)-succinyl-L-ornithine + 2 NH4(+) + CO2. Its pathway is amino-acid degradation; L-arginine degradation via AST pathway; L-glutamate and succinate from L-arginine: step 2/5. In terms of biological role, catalyzes the hydrolysis of N(2)-succinylarginine into N(2)-succinylornithine, ammonia and CO(2). This Escherichia coli O8 (strain IAI1) protein is N-succinylarginine dihydrolase.